A 663-amino-acid chain; its full sequence is Polyunsaturated fatty acid lipoxygenase ALOX12 (663 aa).

The region spanning 2-114 (GRYRVRVVTG…ILSLPEGTAR (113 aa)) is the PLAT domain. The 549-residue stretch at 115-663 (LAGDNALDVF…PSRIENSITI (549 aa)) folds into the Lipoxygenase domain. At Ser-246 the chain carries Phosphoserine. His-360, His-365, His-540, Asn-544, and Ile-663 together coordinate Fe cation.

This sequence belongs to the lipoxygenase family. The cofactor is Fe cation. As to expression, found primarily in platelets and in microsomal and cytosolic fractions of the epidermis (at protein level).

It localises to the cytoplasm. It is found in the cytosol. The protein resides in the membrane. The enzyme catalyses (5Z,8Z,11Z,14Z)-eicosatetraenoate + O2 = (12S)-hydroperoxy-(5Z,8Z,10E,14Z)-eicosatetraenoate. The catalysed reaction is (9Z,12Z)-octadecadienoate + O2 = (13S)-hydroperoxy-(9Z,11E)-octadecadienoate. It catalyses the reaction 2 leukotriene A4 + O2 + 2 H2O = 2 lipoxin A4. It carries out the reaction 2 leukotriene A4 + O2 + 2 H2O = 2 lipoxin B4. The enzyme catalyses (5Z,8Z,11Z)-eicosatrienoate + O2 = (12S)-hydroperoxy-(5Z,8Z,10E)-eicosatrienoate. The catalysed reaction is (8Z,11Z,14Z)-eicosatrienoate + O2 = (12S)-hydroperoxy-(8Z,10E,14Z)-eicosatrienoate. It catalyses the reaction (4Z,7Z,10Z,13Z,16Z,19Z)-docosahexaenoate + O2 = (14S)-hydroperoxy-(4Z,7Z,10Z,12E,16Z,19Z)-docosahexaenoate. It carries out the reaction (7S)-hydroperoxy-(4Z,8E,10Z,13Z,16Z,19Z)-docosahexaenoate + O2 = (7S,14S)-dihydroperoxy-(4Z,8E,10Z,12E,16Z,19Z)-docosahexaenoate. The enzyme catalyses (7S)-hydroperoxy-(4Z,8E,10Z,13Z,16Z,19Z)-docosahexaenoate + O2 = (7S,17S)-dihydroperoxy-(4Z,8E,10Z,13Z,15E,19Z)-docosahexaenoate. The catalysed reaction is (14R,15S)-epoxy-(5Z,8Z,11Z)-eicosatrienoate + O2 = (12S)-hydroperoxy-(14R,15S)-epoxy-(5Z,8Z,10E)-eicosatrienoate. It catalyses the reaction (14S,15R)-epoxy-(5Z,8Z,11Z)-eicosatrienoate + O2 = (12S)-hydroperoxy-(14S,15R)-epoxy-(5Z,8Z,10E)-eicosatrienoate. It carries out the reaction (5Z,8Z,11Z,14Z)-eicosatetraenoate + O2 = (15S)-hydroperoxy-(5Z,8Z,11Z,13E)-eicosatetraenoate. The enzyme catalyses (14S)-hydroperoxy-(4Z,7Z,10Z,12E,16Z,19Z)-docosahexaenoate = (13S,14S)-epoxy-(4Z,7Z,9E,11E,16Z,19Z)-docosahexaenoate + H2O. The catalysed reaction is N-(5Z,8Z,11Z,14Z)-eicosatetraenoyl-L-alanine + O2 = N-(15S)-hydroperoxy-(5Z,8Z,11Z,13E)-eicosatetraenoyl-alanine. It catalyses the reaction N-(5Z,8Z,11Z,14Z)-eicosatetraenoyl-L-alanine + O2 = N-(12S)-hydroperoxy-(5Z,8Z,10E,14Z)-eicosatetraenoyl-alanine. It carries out the reaction N-(5Z,8Z,11Z,14Z)-eicosatetraenoyl-gamma-aminobutanoate + O2 = N-(15S)-hydroperoxy-(5Z,8Z,11Z,13E)-eicosatetraenoyl-gamma-aminobutanoate. The enzyme catalyses N-(5Z,8Z,11Z,14Z)-eicosatetraenoyl-gamma-aminobutanoate + O2 = N-(12S)-hydroperoxy-(5Z,8Z,10E,14Z)-eicosatetraenoyl-gamma-aminobutanoate. The catalysed reaction is N-(5Z,8Z,11Z,14Z)-eicosatetraenoyl-glycine + O2 = N-(15S)-hydroperoxy-(5Z,8Z,11Z,13E)-eicosatetraenoyl-glycine. It catalyses the reaction N-(5Z,8Z,11Z,14Z)-eicosatetraenoyl-glycine + O2 = N-(12S)-hydroperoxy-(5Z,8Z,10E,14Z)-eicosatetraenoyl-glycine. It carries out the reaction N-(5Z,8Z,11Z,14Z)-eicosatetraenoyl-taurine + O2 = N-(12S)-hydroperoxy-(5Z,8Z,10E,14Z)-eicosatetraenoyl-taurine. The enzyme catalyses N-(5Z,8Z,11Z,14Z)-eicosatetraenoyl-taurine + O2 = N-(15S)-hydroperoxy-(5Z,8Z,11Z,13E)-eicosatetraenoyl-taurine. The catalysed reaction is (5Z,8Z,11Z,14Z,17Z)-eicosapentaenoate + O2 = (12S)-hydroperoxy-(5Z,8Z,10E,14Z,17Z)-eicosapentaenoate. It functions in the pathway lipid metabolism; hydroperoxy eicosatetraenoic acid biosynthesis. Activated by EGF. Arachidonic acid conversion is inhibited by (13S,14S)-epoxy-(4Z,7Z,9E,11E,16Z,19Z)-docosahexaenoate (13S,14S-epoxy-DHA). Arachidonate 12-lipoxygenase activity is decreased when PH decreases from 7.4 to 6. Catalyzes the regio and stereo-specific incorporation of molecular oxygen into free and esterified polyunsaturated fatty acids generating lipid hydroperoxides that can be further reduced to the corresponding hydroxy species. Mainly converts arachidonate ((5Z,8Z,11Z,14Z)-eicosatetraenoate) to the specific bioactive lipid (12S)-hydroperoxyeicosatetraenoate/(12S)-HPETE. Through the production of bioactive lipids like (12S)-HPETE it regulates different biological processes including platelet activation. It can also catalyze the epoxidation of double bonds of polyunsaturated fatty acids such as (14S)-hydroperoxy-docosahexaenoate/(14S)-HPDHA resulting in the formation of (13S,14S)-epoxy-DHA. Furthermore, it may participate in the sequential oxidations of DHA ((4Z,7Z,10Z,13Z,16Z,19Z)-docosahexaenoate) to generate specialized pro-resolving mediators (SPMs) like resolvin D5 ((7S,17S)-diHPDHA) and (7S,14S)-diHPDHA, that actively down-regulate the immune response and have anti-aggregation properties with platelets. An additional function involves a multistep process by which it transforms leukotriene A4/LTA4 into the bioactive lipids lipoxin A4/LXA4 and lipoxin B4/LXB4, both are vasoactive and LXA4 may regulate neutrophil function via occupancy of specific recognition sites. Can also peroxidize linoleate ((9Z,12Z)-octadecadienoate) to (13S)-hydroperoxyoctadecadienoate/ (13S-HPODE). Due to its role in regulating both the expression of the vascular endothelial growth factor (VEGF, an angiogenic factor involved in the survival and metastasis of solid tumors) and the expression of integrin beta-1 (known to affect tumor cell migration and proliferation), it can be regarded as protumorigenic. Important for cell survival, as it may play a role not only in proliferation but also in the prevention of apoptosis in vascular smooth muscle cells. This is Polyunsaturated fatty acid lipoxygenase ALOX12 (Alox12) from Mus musculus (Mouse).